The chain runs to 507 residues: uncharacterized protein (507 aa).

Low complexity predominate over residues 1–12 (MEKSISSISKAS). The segment at 1–20 (MEKSISSISKASMNSDEKLD) is disordered. Helical transmembrane passes span 57–74 (FDFRILPLLALLYLFNAL), 100–120 (IMISIFYIPFVLCAFPFSYLY), 126–146 (ARILPFFMLSFGAMSLCQAAV), 157–177 (WFLGMAESAVLPGVVYYLTTF), 189–209 (IFYAAANVSSAFGGLLAYGVF), 221–241 (YLFLIEGGVTFLCAIVIFLVL), 283–303 (VFKHPIAILWLLEEMALGVPL), 326–346 (LMTVAPAISGAIWLLVFAFIS), 353–373 (GIVLIAAISTTMIGFIVYGSI), 379–399 (IGVSYFACFLMTAGAAASSVL), 416–436 (VFTSVGVPLANVMGLVSANIF), and 445–465 (VPALGITAGFGGLGILLVASI).

This sequence belongs to the major facilitator superfamily. Allantoate permease family.

The protein localises to the endoplasmic reticulum. It localises to the membrane. This is an uncharacterized protein from Schizosaccharomyces pombe (strain 972 / ATCC 24843) (Fission yeast).